A 338-amino-acid polypeptide reads, in one-letter code: RNA 3'-terminal phosphate cyclase (338 aa).

ATP contacts are provided by residues glutamine 103 and 283–287 (YLADQ). Residue histidine 308 is the Tele-AMP-histidine intermediate of the active site.

The protein belongs to the RNA 3'-terminal cyclase family. Type 1 subfamily.

The protein localises to the cytoplasm. It catalyses the reaction a 3'-end 3'-phospho-ribonucleotide-RNA + ATP = a 3'-end 2',3'-cyclophospho-ribonucleotide-RNA + AMP + diphosphate. Catalyzes the conversion of 3'-phosphate to a 2',3'-cyclic phosphodiester at the end of RNA. The mechanism of action of the enzyme occurs in 3 steps: (A) adenylation of the enzyme by ATP; (B) transfer of adenylate to an RNA-N3'P to produce RNA-N3'PP5'A; (C) and attack of the adjacent 2'-hydroxyl on the 3'-phosphorus in the diester linkage to produce the cyclic end product. The biological role of this enzyme is unknown but it is likely to function in some aspects of cellular RNA processing. In Escherichia coli O127:H6 (strain E2348/69 / EPEC), this protein is RNA 3'-terminal phosphate cyclase.